The following is a 117-amino-acid chain: Ribosome-binding factor A (117 aa).

This sequence belongs to the RbfA family. Monomer. Binds 30S ribosomal subunits, but not 50S ribosomal subunits or 70S ribosomes.

The protein resides in the cytoplasm. Functionally, one of several proteins that assist in the late maturation steps of the functional core of the 30S ribosomal subunit. Associates with free 30S ribosomal subunits (but not with 30S subunits that are part of 70S ribosomes or polysomes). Required for efficient processing of 16S rRNA. May interact with the 5'-terminal helix region of 16S rRNA. This is Ribosome-binding factor A from Lacticaseibacillus casei (strain BL23) (Lactobacillus casei).